The primary structure comprises 259 residues: Thiazole synthase (259 aa).

The active-site Schiff-base intermediate with DXP is K99. 1-deoxy-D-xylulose 5-phosphate contacts are provided by residues G160, 187 to 188 (AG), and 209 to 210 (NT).

This sequence belongs to the ThiG family. Homotetramer. Forms heterodimers with either ThiH or ThiS.

Its subcellular location is the cytoplasm. It catalyses the reaction [ThiS sulfur-carrier protein]-C-terminal-Gly-aminoethanethioate + 2-iminoacetate + 1-deoxy-D-xylulose 5-phosphate = [ThiS sulfur-carrier protein]-C-terminal Gly-Gly + 2-[(2R,5Z)-2-carboxy-4-methylthiazol-5(2H)-ylidene]ethyl phosphate + 2 H2O + H(+). The protein operates within cofactor biosynthesis; thiamine diphosphate biosynthesis. Its function is as follows. Catalyzes the rearrangement of 1-deoxy-D-xylulose 5-phosphate (DXP) to produce the thiazole phosphate moiety of thiamine. Sulfur is provided by the thiocarboxylate moiety of the carrier protein ThiS. In vitro, sulfur can be provided by H(2)S. This Solibacter usitatus (strain Ellin6076) protein is Thiazole synthase.